The sequence spans 149 residues: Gonadotropin subunit beta-2 (149 aa).

Residues 1–24 form the signal peptide; sequence MARIPECTILLLLCMCVLAVPAQC. Disulfide bonds link Cys30/Cys78, Cys44/Cys93, Cys47/Cys131, Cys55/Cys109, Cys59/Cys111, and Cys114/Cys121. Residue Asn34 is glycosylated (N-linked (GlcNAc...) asparagine).

It belongs to the glycoprotein hormones subunit beta family. As to quaternary structure, heterodimer of an alpha and a beta chain.

It localises to the secreted. In terms of biological role, involved in gametogenesis and steroidogenesis. This is Gonadotropin subunit beta-2 (cgbb) from Clupea pallasii (Pacific herring).